Consider the following 116-residue polypeptide: Large ribosomal subunit protein bL19 (116 aa).

Belongs to the bacterial ribosomal protein bL19 family.

This protein is located at the 30S-50S ribosomal subunit interface and may play a role in the structure and function of the aminoacyl-tRNA binding site. This Clostridioides difficile (strain 630) (Peptoclostridium difficile) protein is Large ribosomal subunit protein bL19.